We begin with the raw amino-acid sequence, 174 residues long: MTVVEAIKMPNEHVFVPGGENSRSFRNALGAFTTGVTVVTATTPEGPIGMTVNSFASVSLDPPLVLWSPAKSSSRHPAFSEATHFAIHVLSADQDVLSARFTRNGRAFDDLDWEINDEGVPVIPGTLARFECRRAAAHDAGDHTIIVGEVLRAAHRDGDPLCFSGGAFGRFSRQ.

It belongs to the non-flavoprotein flavin reductase family.

It carries out the reaction FMNH2 + NAD(+) = FMN + NADH + 2 H(+). In terms of biological role, part of the sulfoquinovose monooxygenase (sulfo-SMO) pathway, a D-sulfoquinovose degradation pathway that enables the complete utilization of all carbons within sulfoquinovose (SQ) with concomitant production of inorganic sulfite. Catalyzes the NADH-dependent reduction of FMN. FMNH(2) is then transferred to the sulfoquinovose monooxygenase SmoC. This chain is FMN reductase (NADH) SmoA, found in Agrobacterium fabrum (strain C58 / ATCC 33970) (Agrobacterium tumefaciens (strain C58)).